Consider the following 196-residue polypeptide: Bcl-2-like protein 11 (196 aa).

Positions M1–P68 are disordered. The segment covering T34 to N43 has biased composition (polar residues). S65 is modified (phosphoserine; by MAPK). 3 positions are modified to phosphoserine: S73, S83, and S90. Positions S90–S114 are disordered. The short motif at I146–T160 is the BH3 element.

This sequence belongs to the Bcl-2 family. In terms of assembly, forms heterodimers with a number of antiapoptotic Bcl-2 proteins, including MCL1, BCL2, BCL2L1 isoform Bcl-X(L), BCL2A1/BFL-1, and BCL2L2/BCLW. Does not heterodimerize with proapoptotic proteins such as BAD, BOK or BAK. Identified in a complex containing BCL2L11, DYNLL1 and BCL2L1 isoform Bcl-X(L); BH3 integrity is required for BCL2L1-binding. Interacts with YWHAZ. When phosphorylated, interacts with TRIM2; this interaction is associated with ubiquitination and degradation. Interacts (via BH3) with MCL1; this interaction may sequester BCL2L11 and prevent its pro-apoptotic activity. When phosphorylated, isoform BimEL interacts with USP27X; this interaction leads to BCL2L11 deubiquitination and stabilization. Interacts with GIMAP5. Interacts with BCL2L10/BCL-B. Post-translationally, phosphorylation at Ser-65 by MAPK1/MAPK3 leads interaction with TRIM2 and ubiquitination, followed by proteasomal degradation. Deubiquitination catalyzed by USP27X stabilizes the protein. Ubiquitination by TRIM2 following phosphorylation by MAPK1/MAPK3 leads to proteasomal degradation. Conversely, deubiquitination catalyzed by USP27X stabilizes the protein. As to expression, widely expressed.

The protein resides in the membrane. It is found in the mitochondrion. In terms of biological role, induces apoptosis and anoikis. The polypeptide is Bcl-2-like protein 11 (Bcl2l11) (Rattus norvegicus (Rat)).